We begin with the raw amino-acid sequence, 87 residues long: Candoxin (87 aa).

An N-terminal signal peptide occupies residues 1–21 (MKTLLLTLVVVTIVCLDLGYT). 5 cysteine pairs are disulfide-bonded: C24–C47, C27–C32, C40–C64, C68–C80, and C81–C86.

As to expression, expressed by the venom gland.

The protein resides in the secreted. Functionally, binds and inhibits muscular and neuronal nicotinic acetylcholine receptors (nAChR). Is a reversible antagonist of muscle nAChR (alpha-1-beta-1-delta-epsilon/CHRNA1-CHRNB1-CHRND-CHRNE) (IC(50)=10 nM) and a potent and poorly reversible antagonist of the neuronal alpha-7/CHRNA7 nAChR (IC(50)=50 nM). May exhibit differential affinities for the two binding sites on the muscle nAChR. The polypeptide is Candoxin (Bungarus candidus (Malayan krait)).